The primary structure comprises 157 residues: MTKTVFVLNGPNLNLLGKREPGIYGVATLDDIEASCKREAGQLELQIDFRQSNHEGDLVSWIQEAGEKNAYVLINPAAYSHTSVAIHDAIRSARVTVVEVHLSNIHAREAFRHHSHVSAVAKGVICGFGAEGYLLGLRALAAIAKEEEKNGQSIKGA.

Tyr24 serves as the catalytic Proton acceptor. Asn75, His81, and Asp88 together coordinate substrate. The active-site Proton donor is His101. Substrate contacts are provided by residues 102 to 103 (LS) and Arg112.

It belongs to the type-II 3-dehydroquinase family. As to quaternary structure, homododecamer.

It catalyses the reaction 3-dehydroquinate = 3-dehydroshikimate + H2O. It participates in metabolic intermediate biosynthesis; chorismate biosynthesis; chorismate from D-erythrose 4-phosphate and phosphoenolpyruvate: step 3/7. In terms of biological role, catalyzes a trans-dehydration via an enolate intermediate. The sequence is that of 3-dehydroquinate dehydratase from Brucella abortus (strain S19).